The sequence spans 294 residues: MNITQLQILAAVVETGNFSAAALQLDLSQSAVSRAIAALEDELGVVLLSRGRFGARPTRVGERVLQLAQRMLQLHDSIVHEVNLEKGLQGGHLRIASFRSAATHVLPPRLALFRQRCPGVSVSIIETDPQGVEQALREGKVDIGLLPLPRSEEFDTWEITRDEYVVLLPSTAHPLGQPLTWAQLSRYEFILYNYAECTTAVRQHWATARQELKVAYEIKEDSTIVSMVAQGLGAAILPRLAAVPIPPEVAAHSLPIPLERVIGAAILASALQVPSVFAFLDVLRQTAPEVRATG.

One can recognise an HTH lysR-type domain in the interval 1 to 58 (MNITQLQILAAVVETGNFSAAALQLDLSQSAVSRAIAALEDELGVVLLSRGRFGARPT). The segment at residues 18 to 37 (FSAAALQLDLSQSAVSRAIA) is a DNA-binding region (H-T-H motif).

This sequence belongs to the LysR transcriptional regulatory family.

In Synechococcus elongatus (strain ATCC 33912 / PCC 7942 / FACHB-805) (Anacystis nidulans R2), this protein is Probable HTH-type transcriptional regulator LrrA (lrrA).